Consider the following 493-residue polypeptide: Cytoplasmic tRNA 2-thiolation protein 2 (493 aa).

Phosphoserine is present on S489.

Belongs to the CTU2/NCS2 family. As to quaternary structure, interacts with NCS6 and URM1. May act by forming a heterodimer with NCS6.

It localises to the cytoplasm. Its pathway is tRNA modification; 5-methoxycarbonylmethyl-2-thiouridine-tRNA biosynthesis. Plays a central role in 2-thiolation of mcm(5)S(2)U at tRNA wobble positions of tRNA(Lys), tRNA(Glu) and tRNA(Gln). May act by forming a heterodimer with NCS6 that ligates sulfur from thiocarboxylated URM1 onto the uridine of tRNAs at wobble position. Prior mcm(5) tRNA modification by the elongator complex is required for 2-thiolation. May also be involved in protein urmylation and in invasive and pseudohyphal growth. Inhibits replication of Brome mosaic virus. The chain is Cytoplasmic tRNA 2-thiolation protein 2 from Saccharomyces cerevisiae (strain ATCC 204508 / S288c) (Baker's yeast).